Consider the following 330-residue polypeptide: Phenylalanine--tRNA ligase alpha subunit (330 aa).

Glu255 contributes to the Mg(2+) binding site.

This sequence belongs to the class-II aminoacyl-tRNA synthetase family. Phe-tRNA synthetase alpha subunit type 1 subfamily. As to quaternary structure, tetramer of two alpha and two beta subunits. The cofactor is Mg(2+).

The protein resides in the cytoplasm. The catalysed reaction is tRNA(Phe) + L-phenylalanine + ATP = L-phenylalanyl-tRNA(Phe) + AMP + diphosphate + H(+). The polypeptide is Phenylalanine--tRNA ligase alpha subunit (Acinetobacter baylyi (strain ATCC 33305 / BD413 / ADP1)).